A 115-amino-acid polypeptide reads, in one-letter code: MTDISEKLDPLVDYIMKNCLWQFNSRGWDRLKQNAGILSQTCEILCGEEPVHETAMDRCYWVDAVILSRAYKARFPWLMAMTKPEIKSLFKALHEKIDHLTVHGSLNTELTVPHY.

As to quaternary structure, hexamer of two alpha, two beta, and two delta chains. It depends on iron-sulfur cluster as a cofactor.

It carries out the reaction N2 + 8 reduced [2Fe-2S]-[ferredoxin] + 16 ATP + 16 H2O = H2 + 8 oxidized [2Fe-2S]-[ferredoxin] + 2 NH4(+) + 16 ADP + 16 phosphate + 6 H(+). Its function is as follows. The key enzymatic reactions in nitrogen fixation are catalyzed by the nitrogenase complex, which has 2 components: the iron protein (component 2) and a component 1 which is either a molybdenum-iron protein, a vanadium-iron, or an iron-iron protein. The polypeptide is Nitrogenase iron-iron protein delta chain (anfG) (Rhodobacter capsulatus (Rhodopseudomonas capsulata)).